Consider the following 345-residue polypeptide: L-threonine 3-dehydrogenase (345 aa).

Cysteine 42 contacts Zn(2+). Active-site charge relay system residues include threonine 44 and histidine 47. Zn(2+)-binding residues include histidine 67, glutamate 68, cysteine 97, cysteine 100, cysteine 103, and cysteine 111. NAD(+)-binding positions include isoleucine 179, aspartate 199, arginine 204, 266–268, and 290–291; these read LGI and IY.

This sequence belongs to the zinc-containing alcohol dehydrogenase family. As to quaternary structure, homotetramer. It depends on Zn(2+) as a cofactor.

It localises to the cytoplasm. It catalyses the reaction L-threonine + NAD(+) = (2S)-2-amino-3-oxobutanoate + NADH + H(+). The protein operates within amino-acid degradation; L-threonine degradation via oxydo-reductase pathway; glycine from L-threonine: step 1/2. Functionally, catalyzes the NAD(+)-dependent oxidation of L-threonine to 2-amino-3-ketobutyrate. The chain is L-threonine 3-dehydrogenase from Rhizobium etli (strain CIAT 652).